We begin with the raw amino-acid sequence, 285 residues long: Methyltransferase grgD (285 aa).

This sequence belongs to the methyltransferase superfamily. LaeA methyltransferase family.

It participates in secondary metabolite biosynthesis. Its function is as follows. Methyltransferase; part of the gene cluster that mediates the biosynthesis of gregatin A, a fungal polyketide featuring an alkylated furanone core. The PKS grgA synthesizes C11 and C4 polyketide chains in the presence and absence of the trans-enoyl reductase grgB, respectively. The polyketide transferase grgF is then responsible for the fusion of the two carbon chains to produce the furanone skeleton of gregatin A. Next, the cytochrome P450 monooxygenase grgG accepts performs the oxidative cyclization to furnish the gregatin scaffold and leads to the formation of desmethylgregatin A. Finally, the O-methyltransferase grgD methylates the carboxyl group of desmethylgregatin A to provide gregatin A. This is Methyltransferase grgD from Penicillium sp.